A 162-amino-acid polypeptide reads, in one-letter code: Photosystem II extrinsic protein V (162 aa).

Positions 1–25 (MFKKFSALFTLLFTLCLVNPMLVYS) are cleaved as a signal peptide. Cys62, Cys65, His66, and His117 together coordinate heme c.

The protein belongs to the cytochrome c family. PsbV subfamily. In terms of assembly, PSII is composed of 1 copy each of membrane proteins PsbA, PsbB, PsbC, PsbD, PsbE, PsbF, PsbH, PsbI, PsbJ, PsbK, PsbL, PsbM, PsbT, PsbX, PsbY, PsbZ, Psb30/Ycf12, at least 3 peripheral proteins of the oxygen-evolving complex and a large number of cofactors. It forms dimeric complexes. The cofactor is heme c.

It localises to the plastid. The protein localises to the chloroplast thylakoid membrane. Its function is as follows. One of the extrinsic, lumenal subunits of photosystem II (PSII). PSII is a light-driven water plastoquinone oxidoreductase, using light energy to abstract electrons from H(2)O, generating a proton gradient subsequently used for ATP formation. The extrinsic proteins stabilize the structure of photosystem II oxygen-evolving complex (OEC), the ion environment of oxygen evolution and protect the OEC against heat-induced inactivation. The polypeptide is Photosystem II extrinsic protein V (Guillardia theta (Cryptophyte)).